The following is a 337-amino-acid chain: MAVKVGINGFGRIGRIVFRNAVEHPEIEVVAVNDPFIDPEYAAYMLKYDSSHGVFKGEIKKDADGLIVNGKKVKFHTERDPSAIPWKASGAEYIVESTGVFTTTEKAKAHLTGGAKKVIISAPSADAPMYVMGVNEKTYDGKADVISNASCTTNCLAPLAKVIHDKYTIVEGLMTTVHSYTATQKTVDGPSGKDWRGGRGAAQNIIPSSTGAAKAVGKVIPDLNGKLTGMSMRVPTPNVSVVDLTVRIEKGATYDEIKATVKEAANGSLAGILGYTEDDIVSSDMNGNTNSSIFDAKAGISLNKNFVKLIAWYDNEWGYSRRVLDLLAYVAKADASK.

NAD(+) is bound by residues 12-13 (RI), aspartate 34, and arginine 79. Residues 150–152 (SCT), threonine 181, 210–211 (TG), and arginine 233 contribute to the D-glyceraldehyde 3-phosphate site. Cysteine 151 (nucleophile) is an active-site residue. Residue asparagine 315 participates in NAD(+) binding.

The protein belongs to the glyceraldehyde-3-phosphate dehydrogenase family. As to quaternary structure, homotetramer.

It is found in the cytoplasm. The catalysed reaction is D-glyceraldehyde 3-phosphate + phosphate + NAD(+) = (2R)-3-phospho-glyceroyl phosphate + NADH + H(+). The protein operates within carbohydrate degradation; glycolysis; pyruvate from D-glyceraldehyde 3-phosphate: step 1/5. The polypeptide is Glyceraldehyde-3-phosphate dehydrogenase (GPD-1) (Claviceps purpurea (strain 20.1) (Ergot fungus)).